The sequence spans 600 residues: Aspartate--tRNA(Asp/Asn) ligase (600 aa).

Glutamate 174 lines the L-aspartate pocket. Residues 198–201 (QLFK) are aspartate. Arginine 220 contributes to the L-aspartate binding site. Residues 220–222 (RDE) and glutamine 229 contribute to the ATP site. L-aspartate is bound at residue histidine 457. Glutamate 491 provides a ligand contact to ATP. Arginine 498 is a binding site for L-aspartate. 543–546 (GLDR) serves as a coordination point for ATP.

Belongs to the class-II aminoacyl-tRNA synthetase family. Type 1 subfamily. As to quaternary structure, homodimer.

It localises to the cytoplasm. The enzyme catalyses tRNA(Asx) + L-aspartate + ATP = L-aspartyl-tRNA(Asx) + AMP + diphosphate. Its function is as follows. Aspartyl-tRNA synthetase with relaxed tRNA specificity since it is able to aspartylate not only its cognate tRNA(Asp) but also tRNA(Asn). Reaction proceeds in two steps: L-aspartate is first activated by ATP to form Asp-AMP and then transferred to the acceptor end of tRNA(Asp/Asn). This chain is Aspartate--tRNA(Asp/Asn) ligase, found in Burkholderia ambifaria (strain ATCC BAA-244 / DSM 16087 / CCUG 44356 / LMG 19182 / AMMD) (Burkholderia cepacia (strain AMMD)).